Consider the following 119-residue polypeptide: Protein TusC (119 aa).

Belongs to the DsrF/TusC family. In terms of assembly, heterohexamer, formed by a dimer of trimers. The hexameric TusBCD complex contains 2 copies each of TusB, TusC and TusD. The TusBCD complex interacts with TusE.

The protein resides in the cytoplasm. Part of a sulfur-relay system required for 2-thiolation of 5-methylaminomethyl-2-thiouridine (mnm(5)s(2)U) at tRNA wobble positions. This Citrobacter koseri (strain ATCC BAA-895 / CDC 4225-83 / SGSC4696) protein is Protein TusC.